A 418-amino-acid polypeptide reads, in one-letter code: Cell division protein FtsA (418 aa).

This sequence belongs to the FtsA/MreB family. In terms of assembly, self-interacts. Interacts with FtsZ.

It localises to the cell inner membrane. Functionally, cell division protein that is involved in the assembly of the Z ring. May serve as a membrane anchor for the Z ring. The sequence is that of Cell division protein FtsA from Buchnera aphidicola subsp. Acyrthosiphon pisum (strain APS) (Acyrthosiphon pisum symbiotic bacterium).